Here is a 143-residue protein sequence, read N- to C-terminus: Hemoglobin subunit alpha-1 (143 aa).

Serine 2 is subject to N-acetylserine. Residues 2–143 (SLSSKDKATV…RALALAEKYR (142 aa)) form the Globin domain. Histidine 60 is a binding site for O2. Histidine 89 is a heme b binding site.

Belongs to the globin family. As to quaternary structure, hb 1 is a heterotetramer of two alpha-1 and two beta-1 chains. Hb 3 is a heterotetramer of two alpha-1 and two beta-2 chains. In terms of tissue distribution, red blood cells.

In terms of biological role, involved in oxygen transport from gills to the various peripheral tissues. In Gadus morhua (Atlantic cod), this protein is Hemoglobin subunit alpha-1 (hba1).